Here is a 465-residue protein sequence, read N- to C-terminus: Ribulose bisphosphate carboxylase large chain (465 aa).

Lysine 4 carries the post-translational modification N6,N6,N6-trimethyllysine. The substrate site is built by asparagine 113 and threonine 163. Catalysis depends on lysine 165, which acts as the Proton acceptor. Position 167 (lysine 167) interacts with substrate. The Mg(2+) site is built by lysine 191, aspartate 193, and glutamate 194. Lysine 191 is subject to N6-carboxylysine. The Proton acceptor role is filled by histidine 284. Substrate-binding residues include arginine 285, histidine 317, and serine 369.

Belongs to the RuBisCO large chain family. Type I subfamily. Heterohexadecamer of 8 large chains and 8 small chains; disulfide-linked. The disulfide link is formed within the large subunit homodimers. The cofactor is Mg(2+). The disulfide bond which can form in the large chain dimeric partners within the hexadecamer appears to be associated with oxidative stress and protein turnover.

It is found in the plastid. It localises to the chloroplast. The enzyme catalyses 2 (2R)-3-phosphoglycerate + 2 H(+) = D-ribulose 1,5-bisphosphate + CO2 + H2O. The catalysed reaction is D-ribulose 1,5-bisphosphate + O2 = 2-phosphoglycolate + (2R)-3-phosphoglycerate + 2 H(+). Its function is as follows. RuBisCO catalyzes two reactions: the carboxylation of D-ribulose 1,5-bisphosphate, the primary event in carbon dioxide fixation, as well as the oxidative fragmentation of the pentose substrate in the photorespiration process. Both reactions occur simultaneously and in competition at the same active site. This chain is Ribulose bisphosphate carboxylase large chain, found in Cornus canadensis (Bunchberry dogwood).